The sequence spans 289 residues: uncharacterized protein (289 aa).

Helical transmembrane passes span 7–27, 33–53, 65–85, 92–112, 123–143, 148–168, 182–202, 212–232, 241–261, and 265–285; these read LLLA…KIGL, FNLA…WVFW, WLHL…FQFL, ATNA…WGLV, GVFL…LEFF, IFGD…TVLG, AYAF…SGFA, VAAL…VWYY, SVAV…FYAL, and PDFF…LTTA. EamA domains are found at residues 14–136 and 159–285; these read LIWA…LIVS and FLWA…LTTA.

It belongs to the EamA transporter family.

It localises to the cell membrane. This is an uncharacterized protein from Archaeoglobus fulgidus (strain ATCC 49558 / DSM 4304 / JCM 9628 / NBRC 100126 / VC-16).